A 283-amino-acid polypeptide reads, in one-letter code: Pantothenate synthetase (283 aa).

Residue 30–37 (MGNLHAGH) participates in ATP binding. Residue H37 is the Proton donor of the active site. Residue Q61 participates in (R)-pantoate binding. Q61 provides a ligand contact to beta-alanine. Position 149 to 152 (149 to 152 (GEKD)) interacts with ATP. Q155 serves as a coordination point for (R)-pantoate. Residues V178 and 186 to 189 (LSSR) each bind ATP.

Belongs to the pantothenate synthetase family. In terms of assembly, homodimer.

It is found in the cytoplasm. It carries out the reaction (R)-pantoate + beta-alanine + ATP = (R)-pantothenate + AMP + diphosphate + H(+). It participates in cofactor biosynthesis; (R)-pantothenate biosynthesis; (R)-pantothenate from (R)-pantoate and beta-alanine: step 1/1. Catalyzes the condensation of pantoate with beta-alanine in an ATP-dependent reaction via a pantoyl-adenylate intermediate. The polypeptide is Pantothenate synthetase (Pseudomonas aeruginosa (strain UCBPP-PA14)).